The chain runs to 433 residues: Nuclear distribution protein PAC1 (433 aa).

In terms of domain architecture, LisH spans 8-40; the sequence is QKDELHRAMLAYLHAAGMHNAYAALQHDAALAD. Residues 57 to 84 are a coiled coil; that stretch reads SVIRLQKKVIDLENRNAALLAELAAAAR. WD repeat units lie at residues 103–144, 146–184, 188–227, 230–269, 272–336, 339–378, and 381–429; these read SHRA…RTLK, HTKA…TNVK, GHDH…CIKT, GHAE…TKME, GHEH…CLRT, GHDN…CTKT, and AHSH…QTIK.

The protein belongs to the WD repeat LIS1/nudF family. Self-associates. Interacts with NDL1 and dynein.

Its subcellular location is the cytoplasm. It localises to the cytoskeleton. It is found in the spindle pole. Functionally, positively regulates the activity of the minus-end directed microtubule motor protein dynein. Plays a central role in positioning the mitotic spindle at the bud neck during cell division. Targets cytoplasmic dynein to microtubule plus ends, thereby promoting dynein-mediated microtubule sliding along the bud cortex and consequently the movement of the mitotic spindle to the bud neck. The protein is Nuclear distribution protein PAC1 of Cryptococcus neoformans var. neoformans serotype D (strain B-3501A) (Filobasidiella neoformans).